The chain runs to 403 residues: NADH-quinone oxidoreductase subunit D (403 aa).

Belongs to the complex I 49 kDa subunit family. As to quaternary structure, NDH-1 is composed of 15 different subunits. Subunits NuoB, C, D, E, F, and G constitute the peripheral sector of the complex.

The protein resides in the cell membrane. It catalyses the reaction a quinone + NADH + 5 H(+)(in) = a quinol + NAD(+) + 4 H(+)(out). Functionally, NDH-1 shuttles electrons from NADH, via FMN and iron-sulfur (Fe-S) centers, to quinones in the respiratory chain. The immediate electron acceptor for the enzyme in this species is believed to be a menaquinone. Couples the redox reaction to proton translocation (for every two electrons transferred, four hydrogen ions are translocated across the cytoplasmic membrane), and thus conserves the redox energy in a proton gradient. The protein is NADH-quinone oxidoreductase subunit D of Deinococcus geothermalis (strain DSM 11300 / CIP 105573 / AG-3a).